We begin with the raw amino-acid sequence, 117 residues long: Large ribosomal subunit protein bL20 (117 aa).

It belongs to the bacterial ribosomal protein bL20 family.

Its function is as follows. Binds directly to 23S ribosomal RNA and is necessary for the in vitro assembly process of the 50S ribosomal subunit. It is not involved in the protein synthesizing functions of that subunit. This chain is Large ribosomal subunit protein bL20, found in Wolinella succinogenes (strain ATCC 29543 / DSM 1740 / CCUG 13145 / JCM 31913 / LMG 7466 / NCTC 11488 / FDC 602W) (Vibrio succinogenes).